Reading from the N-terminus, the 855-residue chain is tRNA(Met) cytidine acetyltransferase TmcA (855 aa).

ATP is bound by residues Q260, 286–295 (GRGKSALLGI), and R438. The N-acetyltransferase domain occupies 480 to 663 (PDLRYWFEDP…GEYSVAVIRP (184 aa)). Acetyl-CoA is bound by residues 590–592 (IAT), 597–603 (MRHGLGS), E630, and R637.

It belongs to the RNA cytidine acetyltransferase family. TmcA subfamily.

The protein localises to the cytoplasm. The catalysed reaction is cytidine(34) in elongator tRNA(Met) + acetyl-CoA + ATP + H2O = N(4)-acetylcytidine(34) in elongator tRNA(Met) + ADP + phosphate + CoA + H(+). Catalyzes the formation of N(4)-acetylcytidine (ac(4)C) at the wobble position of tRNA(Met), by using acetyl-CoA as an acetyl donor and ATP (or GTP). In Methanopyrus kandleri (strain AV19 / DSM 6324 / JCM 9639 / NBRC 100938), this protein is tRNA(Met) cytidine acetyltransferase TmcA.